A 134-amino-acid chain; its full sequence is MAQGRRVERVAALIRKETSELLIHGIRDERVHQGMVSITEVEVSGDLQHCRIFVSVFGEQAQKDEVMDGLEAARGFLRGELGRRLQMRRAPEIVFKLDLGIEKGTTVLHLLGELERERDERGDVTEGTELPDNP.

This sequence belongs to the RbfA family. Monomer. Binds 30S ribosomal subunits, but not 50S ribosomal subunits or 70S ribosomes.

Its subcellular location is the cytoplasm. One of several proteins that assist in the late maturation steps of the functional core of the 30S ribosomal subunit. Associates with free 30S ribosomal subunits (but not with 30S subunits that are part of 70S ribosomes or polysomes). Required for efficient processing of 16S rRNA. May interact with the 5'-terminal helix region of 16S rRNA. This chain is Ribosome-binding factor A, found in Synechococcus sp. (strain CC9311).